Consider the following 342-residue polypeptide: Succinylglutamate desuccinylase (342 aa).

H63, E66, and H155 together coordinate Zn(2+). Residue E219 is part of the active site.

This sequence belongs to the AspA/AstE family. Succinylglutamate desuccinylase subfamily. Zn(2+) serves as cofactor.

It catalyses the reaction N-succinyl-L-glutamate + H2O = L-glutamate + succinate. Its pathway is amino-acid degradation; L-arginine degradation via AST pathway; L-glutamate and succinate from L-arginine: step 5/5. Transforms N(2)-succinylglutamate into succinate and glutamate. The polypeptide is Succinylglutamate desuccinylase (Vibrio cholerae serotype O1 (strain ATCC 39541 / Classical Ogawa 395 / O395)).